A 102-amino-acid polypeptide reads, in one-letter code: NADH-quinone oxidoreductase subunit K (102 aa).

A run of 3 helical transmembrane segments spans residues 5–25, 31–51, and 65–85; these read LSHY…GIFL, IVIL…MVAF, and LFIL…LVVF.

This sequence belongs to the complex I subunit 4L family. In terms of assembly, NDH-1 is composed of 14 different subunits. Subunits NuoA, H, J, K, L, M, N constitute the membrane sector of the complex.

Its subcellular location is the cell inner membrane. The catalysed reaction is a quinone + NADH + 5 H(+)(in) = a quinol + NAD(+) + 4 H(+)(out). In terms of biological role, NDH-1 shuttles electrons from NADH, via FMN and iron-sulfur (Fe-S) centers, to quinones in the respiratory chain. The immediate electron acceptor for the enzyme in this species is believed to be ubiquinone. Couples the redox reaction to proton translocation (for every two electrons transferred, four hydrogen ions are translocated across the cytoplasmic membrane), and thus conserves the redox energy in a proton gradient. This Rhizobium leguminosarum bv. trifolii (strain WSM2304) protein is NADH-quinone oxidoreductase subunit K.